The following is a 407-amino-acid chain: MAAPQNYLAVIKVIGVGGGGVNAINRMIEVGLKGVEFIAINTDAQALLMSDADVKLDVGRELTRGLGAGANPAVGRKAAEDHREEIEEVLKGADMVFVTAGEGGGTGTGRAPVVANIARSLGALTIGVVTRPFTFEGRRRANQAEDGIAELREEVDTLIVIPNDRLLSISDRQVSVLDAFKSADQVLLSGVQGITDLITTPGLINLDFADVKSVMSEAGSALMGIGSARGDDRAVAAAEMAISSPLLEASIDGARGVLLSISGGSDLGLFEINEAAQLVSEAAHPEANIIFGAVIDDALGDEVRVTVIAAGFDGGQPPARRENVLGANSNKREEPAAPARSSAESTRPTGGLGSVPPREESPAPAEPAPATASGESSLGPVSPPHVPPARPYQDTQAEELDVPDFLK.

GTP is bound by residues 18–22 (GGGVN), 105–107 (GTG), Glu-136, Arg-140, and Asp-184. Residues 312 to 407 (FDGGQPPARR…EELDVPDFLK (96 aa)) are disordered. Composition is skewed to low complexity over residues 336-348 (AAPA…STRP) and 368-377 (APATASGESS). Over residues 381-390 (VSPPHVPPAR) the composition is skewed to pro residues. Acidic residues predominate over residues 396 to 407 (QAEELDVPDFLK).

The protein belongs to the FtsZ family. Homodimer. Polymerizes to form a dynamic ring structure in a strictly GTP-dependent manner. Interacts directly with several other division proteins.

Its subcellular location is the cytoplasm. In terms of biological role, essential cell division protein that forms a contractile ring structure (Z ring) at the future cell division site. The regulation of the ring assembly controls the timing and the location of cell division. One of the functions of the FtsZ ring is to recruit other cell division proteins to the septum to produce a new cell wall between the dividing cells. Binds GTP and shows GTPase activity. The chain is Cell division protein FtsZ from Streptomyces griseus.